Here is a 120-residue protein sequence, read N- to C-terminus: NAD(P)H-quinone oxidoreductase subunit 3 (120 aa).

The next 3 membrane-spanning stretches (helical) occupy residues tyrosine 7–alanine 27, methionine 64–valine 84, and leucine 89–valine 109.

The protein belongs to the complex I subunit 3 family. As to quaternary structure, NDH-1 can be composed of about 15 different subunits; different subcomplexes with different compositions have been identified which probably have different functions.

Its subcellular location is the cellular thylakoid membrane. It carries out the reaction a plastoquinone + NADH + (n+1) H(+)(in) = a plastoquinol + NAD(+) + n H(+)(out). The catalysed reaction is a plastoquinone + NADPH + (n+1) H(+)(in) = a plastoquinol + NADP(+) + n H(+)(out). NDH-1 shuttles electrons from an unknown electron donor, via FMN and iron-sulfur (Fe-S) centers, to quinones in the respiratory and/or the photosynthetic chain. The immediate electron acceptor for the enzyme in this species is believed to be plastoquinone. Couples the redox reaction to proton translocation, and thus conserves the redox energy in a proton gradient. Cyanobacterial NDH-1 also plays a role in inorganic carbon-concentration. The protein is NAD(P)H-quinone oxidoreductase subunit 3 of Crocosphaera subtropica (strain ATCC 51142 / BH68) (Cyanothece sp. (strain ATCC 51142)).